We begin with the raw amino-acid sequence, 161 residues long: Transcription elongation factor GreA (161 aa).

Positions Ser43–Ile68 form a coiled coil.

The protein belongs to the GreA/GreB family.

In terms of biological role, necessary for efficient RNA polymerase transcription elongation past template-encoded arresting sites. The arresting sites in DNA have the property of trapping a certain fraction of elongating RNA polymerases that pass through, resulting in locked ternary complexes. Cleavage of the nascent transcript by cleavage factors such as GreA or GreB allows the resumption of elongation from the new 3'terminus. GreA releases sequences of 2 to 3 nucleotides. The chain is Transcription elongation factor GreA from Rickettsia bellii (strain OSU 85-389).